The following is a 184-amino-acid chain: MKNLTDSFVFLGHWPSAGSFGFNTDILATNLINLSVVLGVLIFFGKGVLSDLLDNRKQRILSTIRNSEELCGGAVEQLEKARARLRKVEREAEEFRVNGYSEIEQEKMNLINAAYQNLEQLENYKNETIHFEQQRAINQVQQRVFQQALQGALGTLNNCLNGELHLRTIGANIGILGAMKEITD.

The helical transmembrane segment at 27-49 (LATNLINLSVVLGVLIFFGKGVL) threads the bilayer.

It belongs to the ATPase B chain family. In terms of assembly, F-type ATPases have 2 components, F(1) - the catalytic core - and F(0) - the membrane proton channel. F(1) has five subunits: alpha(3), beta(3), gamma(1), delta(1), epsilon(1). F(0) has four main subunits: a(1), b(1), b'(1) and c(10-14). The alpha and beta chains form an alternating ring which encloses part of the gamma chain. F(1) is attached to F(0) by a central stalk formed by the gamma and epsilon chains, while a peripheral stalk is formed by the delta, b and b' chains.

It localises to the plastid. The protein localises to the chloroplast thylakoid membrane. F(1)F(0) ATP synthase produces ATP from ADP in the presence of a proton or sodium gradient. F-type ATPases consist of two structural domains, F(1) containing the extramembraneous catalytic core and F(0) containing the membrane proton channel, linked together by a central stalk and a peripheral stalk. During catalysis, ATP synthesis in the catalytic domain of F(1) is coupled via a rotary mechanism of the central stalk subunits to proton translocation. Functionally, component of the F(0) channel, it forms part of the peripheral stalk, linking F(1) to F(0). In Nymphaea alba (White water-lily), this protein is ATP synthase subunit b, chloroplastic.